We begin with the raw amino-acid sequence, 396 residues long: Elongation factor Tu 1 (396 aa).

Residues 10–206 (KPHVNVGTIG…ALDTYIPTPE (197 aa)) form the tr-type G domain. Positions 19-26 (GHVDHGKT) are G1. GTP is bound at residue 19-26 (GHVDHGKT). Thr-26 lines the Mg(2+) pocket. The G2 stretch occupies residues 60-64 (GITIN). Residues 81–84 (DCPG) form a G3 region. Residues 81 to 85 (DCPGH) and 136 to 139 (NKCD) contribute to the GTP site. The interval 136–139 (NKCD) is G4. Positions 174–176 (SAK) are G5.

This sequence belongs to the TRAFAC class translation factor GTPase superfamily. Classic translation factor GTPase family. EF-Tu/EF-1A subfamily. In terms of assembly, monomer.

It is found in the cytoplasm. The catalysed reaction is GTP + H2O = GDP + phosphate + H(+). Functionally, GTP hydrolase that promotes the GTP-dependent binding of aminoacyl-tRNA to the A-site of ribosomes during protein biosynthesis. The polypeptide is Elongation factor Tu 1 (Acidovorax sp. (strain JS42)).